The chain runs to 935 residues: Progesterone receptor (935 aa).

The interval 1–49 (MTELKAKGXRAPHVAGSPSSPKVXSPLPCRQAAXPFPGSQTSDTLPEVS) is disordered. The AF3; mediates transcriptional activation stretch occupies residues 1–164 (MTELKAKGXR…SATQRVLSRL (164 aa)). Residues 1–568 (MTELKAKGXR…YSFESLPQKI (568 aa)) form a modulating, Pro-Rich region. Residues 17–28 (SPSSPKVXSPLP) show a composition bias toward low complexity. At serine 20 the chain carries Phosphoserine. Residues 55–59 (LDGLL) carry the LXXL motif 1 motif. Residues 61–255 (PRICQGQDPP…GAAAGGGAAA (195 aa)) are disordered. The residue at position 81 (serine 81) is a Phosphoserine. The short motif at 115 to 119 (LDTLW) is the LXXL motif 2 element. Residues serine 130 and serine 162 each carry the phosphoserine modification. Residues 165–305 (MSRSGGKAGD…LATTVTDFIH (141 aa)) form a mediates transcriptional transrepression region. The Nuclear localization signal signature appears at 183-187 (KVLPR). Serine 190 is modified (phosphoserine). Polar residues predominate over residues 191–203 (PSRQLLLPTTGSP). At serine 213 the chain carries Phosphoserine. The span at 220 to 231 (EVEEEDGSESED) shows a compositional bias: acidic residues. Low complexity predominate over residues 232-246 (SAGPLLKGKPRALGG). Serine 294 carries the post-translational modification Phosphoserine; by MAPK1. Residues 331–365 (GGAGAASAFAPPRSSPSASSTPVPGGDFPDCAYAP) are disordered. Residues 335–356 (AASAFAPPRSSPSASSTPVPGG) are compositionally biased toward low complexity. Serine 345 is modified (phosphoserine; by MAPK). Lysine 388 is covalently cross-linked (Glycyl lysine isopeptide (Lys-Gly) (interchain with G-Cter in SUMO); alternate). A Glycyl lysine isopeptide (Lys-Gly) (interchain with G-Cter in ubiquitin); alternate cross-link involves residue lysine 388. Residue serine 400 is modified to Phosphoserine; by CDK2. Positions 415–452 (PDFPLGPPPPLPPRAPPSRPGEAAVTAAPASASVSSAS) are disordered. The segment covering 418 to 433 (PLGPPPPLPPRAPPSR) has biased composition (pro residues). Residues 434–452 (PGEAAVTAAPASASVSSAS) are compositionally biased toward low complexity. Positions 456–548 (STLECILYKA…VYPPYLNYLR (93 aa)) are AF1; mediates transcriptional activation. Residue lysine 533 forms a Glycyl lysine isopeptide (Lys-Gly) (interchain with G-Cter in SUMO) linkage. NR C4-type zinc fingers lie at residues 569 to 589 (CLICGDEASGCHYGVLTCGSC) and 605 to 629 (CAGRNDCIVDKIRRKNCPACRLRKC). Residues 569-641 (CLICGDEASG…AGMVLGGRKF (73 aa)) constitute a DNA-binding region (nuclear receptor). A Phosphoserine modification is found at serine 678. Positions 681–915 (QDIQLIPPLI…EFPEMMSEVI (235 aa)) constitute an NR LBD domain. The segment at 689–935 (LINLLLSIEP…MVKPLLFHKK (247 aa)) is AF2; mediates transcriptional activation.

It belongs to the nuclear hormone receptor family. Interacts with SMARD1 and UNC45A. Interacts with CUEDC2; the interaction promotes ubiquitination, decreases sumoylation, and represses transcriptional activity. Interacts with PIAS3; the interaction promotes sumoylation of PR in a hormone-dependent manner, inhibits DNA-binding, and alters nuclear export. Interacts with SP1; the interaction requires ligand-induced phosphorylation on Ser-345 by ERK1/2-MAPK. Interacts with PRMT2. Interacts with NCOA2 and NCOA1. Interacts with KLF9. Interacts with GTF2B. In terms of processing, phosphorylated on multiple serine sites. Several of these sites are hormone-dependent. Phosphorylation on Ser-294 is highly hormone-dependent and modulates ubiquitination and sumoylation on Lys-388. Phosphorylation on Ser-345 also requires induction by hormone. Basal phosphorylation on Ser-81, Ser-162, Ser-190 and Ser-400 is increased in response to progesterone and can be phosphorylated in vitro by the CDK2-A1 complex. Increased levels of phosphorylation on Ser-400 also in the presence of EGF, heregulin, IGF, PMA and FBS. Phosphorylation at this site by CDK2 is ligand-independent, and increases nuclear translocation and transcriptional activity. Phosphorylation at Ser-162 and Ser-294, but not at Ser-190, is impaired during the G(2)/M phase of the cell cycle. Phosphorylation on Ser-345 by ERK1/2 MAPK is required for interaction with SP1. Post-translationally, sumoylation is hormone-dependent and represses transcriptional activity. Sumoylation on all three sites is enhanced by PIAS3. Desumoylated by SENP1. Sumoylation on Lys-388, the main site of sumoylation, is repressed by ubiquitination on the same site, and modulated by phosphorylation at Ser-294. Ubiquitination is hormone-dependent and represses sumoylation on the same site. Promoted by MAPK-mediated phosphorylation on Ser-294. In terms of processing, palmitoylated by ZDHHC7 and ZDHHC21. Palmitoylation is required for plasma membrane targeting and for rapid intracellular signaling via ERK and AKT kinases and cAMP generation.

It localises to the nucleus. Its subcellular location is the cytoplasm. In terms of biological role, the steroid hormones and their receptors are involved in the regulation of eukaryotic gene expression and affect cellular proliferation and differentiation in target tissues. Transcriptional activator of several progesteron-dependent promoters in a variety of cell types. Involved in activation of SRC-dependent MAPK signaling on hormone stimulation. In Ateles paniscus (Black spider monkey), this protein is Progesterone receptor (PGR).